We begin with the raw amino-acid sequence, 267 residues long: uncharacterized protein (267 aa).

The ABC transporter domain occupies 2 to 198; that stretch reads LGANGAGKTT…FRNKFIVIEG (197 aa). 3-10 contacts ATP; that stretch reads GANGAGKT.

It belongs to the ABC transporter superfamily.

This is an uncharacterized protein from Alkalihalophilus pseudofirmus (strain ATCC BAA-2126 / JCM 17055 / OF4) (Bacillus pseudofirmus).